Reading from the N-terminus, the 86-residue chain is SEED MATURATION PROTEIN 1 (86 aa).

The tract at residues 52-86 (RIEKGKEQSAASGDQTQIQRDIKDIKGTRTDDSPR) is disordered. Residues 60–70 (SAASGDQTQIQ) are compositionally biased toward polar residues. The segment covering 71-86 (RDIKDIKGTRTDDSPR) has biased composition (basic and acidic residues).

The protein belongs to the LEA type 3 family.

In terms of biological role, protein chaperone involved in seed maturation and dormancy maintenance after high temperature fluctuation (e.g. secondary dormancy after 3 days at 40 degrees Celsius), probably by protecting heat labile proteins required for secondary dormancy (e.g. G6PDH, HOP3, SR45, ECP63, SCL33, RPL32B, ChlADR1, MSBP1, MBF1B, At3g01690, At1g15280, At1g15290, At2g31410, At1g11630, At1g65090, EMB2279, EMB1674 and RPL35C). This chain is SEED MATURATION PROTEIN 1, found in Arabidopsis thaliana (Mouse-ear cress).